Here is a 1046-residue protein sequence, read N- to C-terminus: Arrestin-related trafficking adapter 3 (1046 aa).

Residues 115 to 141 are disordered; sequence YPPTEQKSKKKMDASAPNESNNAANNF. The segment covering 128–140 has biased composition (low complexity); that stretch reads ASAPNESNNAANN. 2 positions are modified to phosphoserine: serine 155 and serine 162. 2 stretches are compositionally biased toward low complexity: residues 168-179 and 198-210; these read SGLSSLNLSPLG and RSSS…GPSR. Positions 168–230 are disordered; the sequence is SGLSSLNLSP…ATSPSVSHHN (63 aa). Serine 213 and serine 586 each carry phosphoserine. The span at 605 to 614 shows a compositional bias: polar residues; the sequence is TRNSRQFNRN. Disordered stretches follow at residues 605–627 and 651–820; these read TRNS…IFNS and PLSP…FAHS. Residues 669–694 show a composition bias toward low complexity; that stretch reads FDFSSDFISDAASGTTTTEVSSSESS. Positions 734-785 are enriched in basic and acidic residues; the sequence is KNSDKNSSETLNKKESMSKIEENKHKRETTPKKRENRDVKSLSTPQREESKD. The span at 802–811 shows a compositional bias: low complexity; the sequence is LSLSSSLHSS. Serine 826 and serine 838 each carry phosphoserine. Residues 868–889 are disordered; sequence NHDKNELNRHSTNTSSTPASAR. Residues 877-889 show a composition bias toward polar residues; it reads HSTNTSSTPASAR. Serine 900 carries the post-translational modification Phosphoserine. Residues 986–1017 form a disordered region; it reads QNSAESDHNNDIFTQGSGLTESSKNSDSEERF. Polar residues predominate over residues 996–1008; sequence DIFTQGSGLTESS. Serine 1022 and serine 1023 each carry phosphoserine.

It belongs to the ALY1 family. In terms of assembly, interacts with PCL6, PCL7 and RSP5. Post-translationally, ubiquitinated by RSP5. Phosphorylated by the cyclin-CDKs PCL6-PHO85 and PCL7-PHO85.

It is found in the cytoplasm. In terms of biological role, may regulate endocytosis by recruiting RSP5 ubiquitin ligase activity to specific plasma membrane proteins in response to extracellular stimuli. This chain is Arrestin-related trafficking adapter 3 (ALY2), found in Saccharomyces cerevisiae (strain ATCC 204508 / S288c) (Baker's yeast).